The following is a 235-amino-acid chain: uncharacterized protein (235 aa).

The helical transmembrane segment at A27–C47 threads the bilayer. In terms of domain architecture, CX spans Y124–S185. The helical transmembrane segment at I187–F207 threads the bilayer.

Its subcellular location is the membrane. This is an uncharacterized protein from Caenorhabditis elegans.